Here is a 269-residue protein sequence, read N- to C-terminus: Phosphate import ATP-binding protein PstB 1 (269 aa).

The 240-residue stretch at 16 to 255 folds into the ABC transporter domain; that stretch reads FTTQNLDIYY…DRTGKVFGDP (240 aa). 48–55 contributes to the ATP binding site; sequence GPSGCGKS.

Belongs to the ABC transporter superfamily. Phosphate importer (TC 3.A.1.7) family. As to quaternary structure, the complex is composed of two ATP-binding proteins (PstB), two transmembrane proteins (PstC and PstA) and a solute-binding protein (PstS).

It is found in the cell inner membrane. The enzyme catalyses phosphate(out) + ATP + H2O = ADP + 2 phosphate(in) + H(+). Part of the ABC transporter complex PstSACB involved in phosphate import. Responsible for energy coupling to the transport system. This chain is Phosphate import ATP-binding protein PstB 1, found in Synechocystis sp. (strain ATCC 27184 / PCC 6803 / Kazusa).